The primary structure comprises 112 residues: ATP synthase subunit c (112 aa).

2 consecutive transmembrane segments (helical) span residues 36 to 56 and 81 to 101; these read FSVL…AIGM and MFIA…IALI.

It belongs to the ATPase C chain family. F-type ATPases have 2 components, F(1) - the catalytic core - and F(0) - the membrane proton channel. F(1) has five subunits: alpha(3), beta(3), gamma(1), delta(1), epsilon(1). F(0) has three main subunits: a(1), b(2) and c(10-14). The alpha and beta chains form an alternating ring which encloses part of the gamma chain. F(1) is attached to F(0) by a central stalk formed by the gamma and epsilon chains, while a peripheral stalk is formed by the delta and b chains.

It localises to the cell inner membrane. In terms of biological role, f(1)F(0) ATP synthase produces ATP from ADP in the presence of a proton or sodium gradient. F-type ATPases consist of two structural domains, F(1) containing the extramembraneous catalytic core and F(0) containing the membrane proton channel, linked together by a central stalk and a peripheral stalk. During catalysis, ATP synthesis in the catalytic domain of F(1) is coupled via a rotary mechanism of the central stalk subunits to proton translocation. The sequence is that of ATP synthase subunit c from Campylobacter jejuni subsp. jejuni serotype O:2 (strain ATCC 700819 / NCTC 11168).